A 704-amino-acid polypeptide reads, in one-letter code: Pentatricopeptide repeat-containing protein At4g28010 (704 aa).

17 PPR repeats span residues 71–105 (LAFA…DTFI), 106–140 (NFVS…GFAF), 141–175 (NVYN…SLMP), 176–210 (DVFS…GCSW), 211–245 (SLVT…GLEA), 246–280 (DLVV…GDSP), 281–315 (CAIT…GVRP), 316–350 (NVYT…DEEP), 351–385 (NAVT…RTRP), 386–416 (DNIT…MLKD), 423–453 (DVIS…LVEK), 458–492 (DRVT…KIVR), 493–527 (NSDT…ELQP), 528–562 (SVFD…NNFP), 563–597 (DVVS…GLSP), 598–632 (DLFT…GFEP), and 633–667 (DAHI…DIVL).

Belongs to the PPR family. P subfamily.

The chain is Pentatricopeptide repeat-containing protein At4g28010 from Arabidopsis thaliana (Mouse-ear cress).